The chain runs to 104 residues: MYAIVETAGRQYRVEEGKILYTEKQKDYSPGDEIVFDRVVFVRKDGEVLVGKPYVEGAKVVGKVLEHAKARKVKTVKYRPRKNSKVEKGHRQWYTAIKIEKIEL.

It belongs to the bacterial ribosomal protein bL21 family. Part of the 50S ribosomal subunit. Contacts protein L20.

In terms of biological role, this protein binds to 23S rRNA in the presence of protein L20. The chain is Large ribosomal subunit protein bL21 from Thermotoga petrophila (strain ATCC BAA-488 / DSM 13995 / JCM 10881 / RKU-1).